We begin with the raw amino-acid sequence, 401 residues long: MRPAGPVPVCCRAGRLMRVFILAGEPSGDRLGGALMAGLRQLCPDVQFDGVGGPAMESEGLSSRFPMAELSIMGLVEVLPKYFHLKRRIAETAQAVLAMRPDVMITIDSPDFSLRVARLVKDASDIRTVHYVAPSVWAWRPGRADKMAKVIDHVLALLPFEPPYMERAGMECDFVGHPVVTEPEATGADIAALRTELGLGAAPVLLALPGSRRGEVERLAPVFGAALRRFLPEHPDMRVVVPVVPHVADQVAQQVAEWPGAPVLVDPRGLAPAQAAMRKRAAFAAADLALAASGTVSLELAAAGTPMVIAYKVNWLTQKIAERMVTIDTVTLVNLVSETRVVPECLGPACTPENIAARLAAVHADPAAQDAAMRLTMERLGRGGTPPGLRAAQAVLDRLPG.

It belongs to the LpxB family.

It catalyses the reaction a lipid X + a UDP-2-N,3-O-bis[(3R)-3-hydroxyacyl]-alpha-D-glucosamine = a lipid A disaccharide + UDP + H(+). Its pathway is bacterial outer membrane biogenesis; LPS lipid A biosynthesis. Condensation of UDP-2,3-diacylglucosamine and 2,3-diacylglucosamine-1-phosphate to form lipid A disaccharide, a precursor of lipid A, a phosphorylated glycolipid that anchors the lipopolysaccharide to the outer membrane of the cell. The protein is Lipid-A-disaccharide synthase of Ruegeria pomeroyi (strain ATCC 700808 / DSM 15171 / DSS-3) (Silicibacter pomeroyi).